Here is a 420-residue protein sequence, read N- to C-terminus: MSTFKAPKGTYDLIPPDSAKYLAVREAIAAPLRNSGYGYIETPGFENVELFARGVGESTDIVTKEMYAFETKGGDRLALRPEGTASVLRAALEANLHKAGNLPVKLWYSGSYYRYERPQKGRYRHFSQVGAEAIGAEDPALDAELIILADQSYRSLGLRNFRILLNSLGDKECRPVYRAALQDFLRGLDLDEDTLRRAEINPLRVLDDKREDVQKQLGGAPLLRDYLCDACKAYHEEVRELITAAGVSFEDDAKLVRGLDYYTRTTFEFVHDGLGSQSAVGGGGRYDGLSEMIGGPALPSVGWALGVDRTVLALEAEGVELELPSSTSVFAVPLGEEARRILFAKVTELRKVGIAADFAYGGKGLKGAMKNANRSGARYTVVAGERDLAEGVVQLKDMESGEQTAVGVNEIVAELEARLG.

The protein belongs to the class-II aminoacyl-tRNA synthetase family. In terms of assembly, homodimer.

The protein localises to the cytoplasm. It carries out the reaction tRNA(His) + L-histidine + ATP = L-histidyl-tRNA(His) + AMP + diphosphate + H(+). The polypeptide is Histidine--tRNA ligase (Streptomyces avermitilis (strain ATCC 31267 / DSM 46492 / JCM 5070 / NBRC 14893 / NCIMB 12804 / NRRL 8165 / MA-4680)).